The chain runs to 342 residues: Signaling lymphocytic activation molecule (342 aa).

The N-terminal stretch at 1–26 (MDSRGFLSLRCLLVLALASKLSCGTG) is a signal peptide. At 27-237 (ESLMNCPEVP…CRPESSVPRQ (211 aa)) the chain is on the extracellular side. One can recognise an Ig-like V-type domain in the interval 29 to 138 (LMNCPEVPGK…QHFCLQLKLY (110 aa)). 7 N-linked (GlcNAc...) asparagine glycosylation sites follow: asparagine 57, asparagine 102, asparagine 125, asparagine 150, asparagine 157, asparagine 189, and asparagine 217. Residues 144–223 (PEIKVLNWTQ…PVSNRSWSFN (80 aa)) enclose the Ig-like C2-type domain. Disulfide bonds link cysteine 158–cysteine 228 and cysteine 164–cysteine 209. The helical transmembrane segment at 238-261 (WRLYAGLFLGGIVGVILIFEVVLL) threads the bilayer. Residues 262–342 (LLRRRGKTNH…VYASVTFPES (81 aa)) are Cytoplasmic-facing. The short motif at 282-287 (TIYAQV) is the ITSM 1 element. 3 positions are modified to phosphotyrosine; by FYN: tyrosine 284, tyrosine 310, and tyrosine 334. Positions 310–315 (YVAATE) match the SH2-binding motif. An ITSM 2 motif is present at residues 332 to 337 (TVYASV).

Interacts (via cytoplasmic domain) with SH2D1A and SH2D1B; SH2D1A mediates association with FYN. Interacts (via cytoplasmic domain phosphorylated on tyrosine residues) with INPP5D and PTPN11; presence of SH2D1A facilitates binding to INPP5D. Interacts with MAP4K1. Interacts with PIK3C3, BECN1 and UVRAG; indicative for an association with PI3K complex II (PI3KC3-C2). Interacts with canine distemper virus HN protein; suggesting that it may serve as a receptor. In terms of processing, phosphorylated on tyrosine residues by FYN.

Its subcellular location is the cell membrane. In terms of biological role, self-ligand receptor of the signaling lymphocytic activation molecule (SLAM) family. SLAM receptors triggered by homo- or heterotypic cell-cell interactions are modulating the activation and differentiation of a wide variety of immune cells and thus are involved in the regulation and interconnection of both innate and adaptive immune response. Activities are controlled by presence or absence of small cytoplasmic adapter proteins, SH2D1A/SAP and/or SH2D1B/EAT-2. SLAMF1-induced signal-transduction events in T-lymphocytes are different from those in B-cells. Two modes of SLAMF1 signaling seem to exist: one depending on SH2D1A (and perhaps SH2D1B) and another in which protein-tyrosine phosphatase 2C (PTPN11)-dependent signal transduction operates. Initially it has been proposed that association with SH2D1A prevents binding to inhibitory effectors including INPP5D/SHIP1 and PTPN11/SHP-2. However, signaling is also regulated by SH2D1A which can simultaneously interact with and recruit FYN which subsequently phosphorylates and activates SLAMF1. Mediates IL-2-independent proliferation of activated T cells during immune responses and induces IFN-gamma production. Downstreaming signaling involves INPP5D/SHIP1, DOK1 and DOK2 leading to inhibited IFN-gamma production in T-cells, and PRKCQ, BCL10 and NFKB1 leading to increased T-cell activation and Th2 cytokine production. Promotes T-cell receptor-induced IL-4 secretion by CD4(+) cells. Inhibits antigen receptor-mediated production of IFN-gamma, but not IL-2, in CD4(-)/CD8(-) T-cells. Required for IL-4 production by germinal centers T follicular helper (T(Fh))cells. May inhibit CD40-induced signal transduction in monocyte-derived dendritic cells. May play a role in allergic responses and may regulate allergen-induced Th2 cytokine and Th1 cytokine secretion. In conjunction with SLAMF6 controls the transition between positive selection and the subsequent expansion and differentiation of the thymocytic natural killer T (NKT) cell lineage. Involved in the peripheral differentiation of indifferent natural killer T (iNKT) cells toward a regulatory NKT2 type. In macrophages involved in down-regulation of IL-12, TNF-alpha and nitric oxide in response to lipopolysaccharide (LPS). In B-cells activates the ERK signaling pathway independently of SH2D1A but implicating both, SYK and INPP5D, and activates Akt signaling dependent on SYK and SH2D1A. In conjunction with SLAMF5 and SLAMF6 may be a negative regulator of the humoral immune response. In Canis lupus familiaris (Dog), this protein is Signaling lymphocytic activation molecule (SLAMF1).